Reading from the N-terminus, the 698-residue chain is Probable microcin-H47 secretion/processing ATP-binding protein MchF (698 aa).

Positions 26–145 constitute a Peptidase C39 domain; sequence QTETAECGLA…RYFTGIALEV (120 aa). Residue C32 is part of the active site. The next 5 membrane-spanning stretches (helical) occupy residues 33–53, 90–110, 289–311, 315–337, and 397–417; these read GLAC…LISL, LGAL…VVLV, TCVV…MLLY, LTWI…YGYY, and LLFG…ILWL. An ABC transmembrane type-1 domain is found at 176–458; it reads LAKIFCLSVV…LTSFLLQLRI (283 aa). In terms of domain architecture, ABC transporter spans 492 to 698; sequence LETTDLSYRY…LRTVDRIISI (207 aa). 526-533 is an ATP binding site; it reads GASGAGKT.

Belongs to the ABC transporter superfamily.

The protein localises to the cell membrane. Functionally, probably involved, in conjunction with MchE, in the secretion of microcin H47. The protein is Probable microcin-H47 secretion/processing ATP-binding protein MchF (mchF) of Escherichia coli.